A 447-amino-acid chain; its full sequence is uncharacterized protein (447 aa).

The protein to E.coli plasmid IncP-alpha RP4 protein TraN.

This is an uncharacterized protein from Haemophilus influenzae (strain ATCC 51907 / DSM 11121 / KW20 / Rd).